The following is a 680-amino-acid chain: Probable Xaa-Pro aminopeptidase P (680 aa).

Mn(2+) contacts are provided by D477, D488, E586, and E600.

The protein belongs to the peptidase M24B family. It depends on Mn(2+) as a cofactor.

It catalyses the reaction Release of any N-terminal amino acid, including proline, that is linked to proline, even from a dipeptide or tripeptide.. Functionally, catalyzes the removal of a penultimate prolyl residue from the N-termini of peptides. The polypeptide is Probable Xaa-Pro aminopeptidase P (AMPP) (Podospora anserina (strain S / ATCC MYA-4624 / DSM 980 / FGSC 10383) (Pleurage anserina)).